Consider the following 359-residue polypeptide: Ribosomal RNA small subunit methyltransferase H (359 aa).

S-adenosyl-L-methionine is bound by residues 39 to 41, Asp-58, Phe-87, Asp-108, and Gln-115; that span reads AGH. The interval 339-359 is disordered; sequence IQGSASPGRAKNTARIRTRRG. Residues 350–359 are compositionally biased toward basic residues; sequence NTARIRTRRG.

It belongs to the methyltransferase superfamily. RsmH family.

The protein localises to the cytoplasm. It carries out the reaction cytidine(1402) in 16S rRNA + S-adenosyl-L-methionine = N(4)-methylcytidine(1402) in 16S rRNA + S-adenosyl-L-homocysteine + H(+). In terms of biological role, specifically methylates the N4 position of cytidine in position 1402 (C1402) of 16S rRNA. The chain is Ribosomal RNA small subunit methyltransferase H from Bifidobacterium longum subsp. infantis (strain ATCC 15697 / DSM 20088 / JCM 1222 / NCTC 11817 / S12).